The chain runs to 407 residues: Succinate--CoA ligase [ADP-forming] subunit beta, hydrogenosomal (407 aa).

The transit peptide at 1–9 (MLSSSFARN) directs the protein to the hydrogenosome. Residues 18–261 (KEICAKYNVA…LKQVNPFEIR (244 aa)) form the ATP-grasp domain. ATP-binding positions include K55, 62–64 (GRG), and E124. The Mg(2+) site is built by N216 and D230. Residues N281 and 338-340 (GIV) each bind substrate.

The protein belongs to the succinate/malate CoA ligase beta subunit family. In terms of assembly, heterodimer of an alpha and a beta subunit. Mg(2+) serves as cofactor.

It localises to the hydrogenosome. The enzyme catalyses succinate + ATP + CoA = succinyl-CoA + ADP + phosphate. It functions in the pathway carbohydrate metabolism; tricarboxylic acid cycle; succinate from succinyl-CoA (ligase route): step 1/1. In terms of biological role, succinyl-CoA synthetase functions in the citric acid cycle (TCA), coupling the hydrolysis of succinyl-CoA to the synthesis of ATP and thus represents the only step of substrate-level phosphorylation in the TCA. The beta subunit provides nucleotide specificity of the enzyme and binds the substrate succinate, while the binding sites for coenzyme A and phosphate are found in the alpha subunit. This Trichomonas vaginalis protein is Succinate--CoA ligase [ADP-forming] subunit beta, hydrogenosomal.